A 242-amino-acid polypeptide reads, in one-letter code: 1-(5-phosphoribosyl)-5-[(5-phosphoribosylamino)methylideneamino] imidazole-4-carboxamide isomerase (242 aa).

The active-site Proton acceptor is D10.

This sequence belongs to the HisA/HisF family.

It localises to the cytoplasm. It catalyses the reaction 1-(5-phospho-beta-D-ribosyl)-5-[(5-phospho-beta-D-ribosylamino)methylideneamino]imidazole-4-carboxamide = 5-[(5-phospho-1-deoxy-D-ribulos-1-ylimino)methylamino]-1-(5-phospho-beta-D-ribosyl)imidazole-4-carboxamide. It functions in the pathway amino-acid biosynthesis; L-histidine biosynthesis; L-histidine from 5-phospho-alpha-D-ribose 1-diphosphate: step 4/9. The chain is 1-(5-phosphoribosyl)-5-[(5-phosphoribosylamino)methylideneamino] imidazole-4-carboxamide isomerase from Corynebacterium diphtheriae (strain ATCC 700971 / NCTC 13129 / Biotype gravis).